We begin with the raw amino-acid sequence, 69 residues long: Toxin CSTX-11 (69 aa).

4 cysteine pairs are disulfide-bonded: cysteine 6–cysteine 21, cysteine 13–cysteine 30, cysteine 20–cysteine 47, and cysteine 32–cysteine 45.

Expressed by the venom gland.

Its subcellular location is the secreted. It localises to the target cell membrane. Functionally, spider venom toxin that shows calcium channel blocking activity and exhibits cytolytic activity by affecting the outer leaflet curvature and/or pore formation across the membrane. It blocks L-type calcium channels (Cav1/CACNA1) in mammalian neurons at nanomolar concentrations. Furthermore, it produces a slow voltage-independent block of mid/low and high voltage-activated calcium channels in cockroach neurons. Potassium ions, histamine, M-ctenitoxin-Cs1a (AC P83619), CSTX-9 (AC P58604), and CSTX-13 (AC P83919) synergistically increase the insecticidal activity of this toxin. In vivo, it causes paralysis in blow flies and provokes death in drosophila. This is Toxin CSTX-11 from Cupiennius salei (American wandering spider).